We begin with the raw amino-acid sequence, 132 residues long: Phosphoribosyl-AMP cyclohydrolase (132 aa).

Asp-79 is a Mg(2+) binding site. Zn(2+) is bound at residue Cys-80. The Mg(2+) site is built by Asp-81 and Asp-83. Zn(2+)-binding residues include Cys-100 and Cys-107.

It belongs to the PRA-CH family. As to quaternary structure, homodimer. Mg(2+) serves as cofactor. The cofactor is Zn(2+).

Its subcellular location is the cytoplasm. The enzyme catalyses 1-(5-phospho-beta-D-ribosyl)-5'-AMP + H2O = 1-(5-phospho-beta-D-ribosyl)-5-[(5-phospho-beta-D-ribosylamino)methylideneamino]imidazole-4-carboxamide. Its pathway is amino-acid biosynthesis; L-histidine biosynthesis; L-histidine from 5-phospho-alpha-D-ribose 1-diphosphate: step 3/9. Functionally, catalyzes the hydrolysis of the adenine ring of phosphoribosyl-AMP. The protein is Phosphoribosyl-AMP cyclohydrolase of Delftia acidovorans (strain DSM 14801 / SPH-1).